We begin with the raw amino-acid sequence, 852 residues long: G-type lectin S-receptor-like serine/threonine-protein kinase At4g03230 (852 aa).

The N-terminal stretch at 1-19 is a signal peptide; sequence MILSVFFYMFLLHIRRLDC. The region spanning 20-154 is the Bulb-type lectin domain; it reads FVAVQDSKTL…GNEANVVWQS (135 aa). Residues 20 to 444 are Extracellular-facing; the sequence is FVAVQDSKTL…RGRGRYGEAK (425 aa). Residues Asn-37, Asn-59, Asn-171, Asn-187, Asn-234, and Asn-243 are each glycosylated (N-linked (GlcNAc...) asparagine). In terms of domain architecture, EGF-like spans 285-321; the sequence is PRDECSVYNACGNFGSCNSKNEEMCKCLPGFRPNFLE. 2 disulfides stabilise this stretch: Cys-289-Cys-301 and Cys-295-Cys-309. The PAN domain maps to 339–426; sequence CGKDGVVVGD…SRNVFIRVAV (88 aa). An N-linked (GlcNAc...) asparagine glycan is attached at Asn-352. Disulfide bonds link Cys-373–Cys-400 and Cys-377–Cys-383. Residues 445 to 465 traverse the membrane as a helical segment; it reads TPVVLIIVVTFTSAAILVVLS. Topologically, residues 466–852 are cytoplasmic; sequence STASYVFLQR…ELTITLEDGR (387 aa). The 288-residue stretch at 532–819 folds into the Protein kinase domain; the sequence is FSNANKLGQG…TLPTPKQPAF (288 aa). ATP-binding positions include 538 to 546 and Lys-560; that span reads LGQGGFGPV. A Phosphoserine modification is found at Ser-566. Positions 621-638 are caM-binding; that stretch reads KLCQRLDWKMRCNIILGI. The active-site Proton acceptor is the Asp-657. Ser-661 and Ser-674 each carry phosphoserine. Thr-691 carries the phosphothreonine modification. Residues 826-852 are disordered; the sequence is SSSKASSSTKPETCSENELTITLEDGR. A phosphoserine mark is found at Ser-831 and Ser-840. Over residues 834-845 the composition is skewed to polar residues; it reads TKPETCSENELT. Thr-847 is modified (phosphothreonine).

This sequence belongs to the protein kinase superfamily. Ser/Thr protein kinase family.

Its subcellular location is the cell membrane. The enzyme catalyses L-seryl-[protein] + ATP = O-phospho-L-seryl-[protein] + ADP + H(+). It carries out the reaction L-threonyl-[protein] + ATP = O-phospho-L-threonyl-[protein] + ADP + H(+). This chain is G-type lectin S-receptor-like serine/threonine-protein kinase At4g03230, found in Arabidopsis thaliana (Mouse-ear cress).